The sequence spans 436 residues: UPF0597 protein YhaM (436 aa).

This sequence belongs to the UPF0597 family.

This chain is UPF0597 protein YhaM, found in Salmonella choleraesuis (strain SC-B67).